The sequence spans 360 residues: Peptide chain release factor 1 (360 aa).

Glutamine 235 carries the N5-methylglutamine modification. Over residues 284-293 the composition is skewed to basic and acidic residues; it reads ARRQQEESST. The segment at 284 to 314 is disordered; the sequence is ARRQQEESSTRRNLLGSGDRSDRNRTYNFPQ.

Belongs to the prokaryotic/mitochondrial release factor family. Methylated by PrmC. Methylation increases the termination efficiency of RF1.

The protein resides in the cytoplasm. Its function is as follows. Peptide chain release factor 1 directs the termination of translation in response to the peptide chain termination codons UAG and UAA. The sequence is that of Peptide chain release factor 1 from Erwinia tasmaniensis (strain DSM 17950 / CFBP 7177 / CIP 109463 / NCPPB 4357 / Et1/99).